The chain runs to 127 residues: Fluoride-specific ion channel FluC (127 aa).

Helical transmembrane passes span 7–27 (VYVA…VAWV), 38–58 (GTLA…VYVV), 70–90 (LIMV…LEAW), and 102–122 (LAYI…GIAL). Na(+) is bound by residues G77 and T80.

It belongs to the fluoride channel Fluc/FEX (TC 1.A.43) family.

The protein resides in the cell inner membrane. It catalyses the reaction fluoride(in) = fluoride(out). Its activity is regulated as follows. Na(+) is not transported, but it plays an essential structural role and its presence is essential for fluoride channel function. Its function is as follows. Fluoride-specific ion channel. Important for reducing fluoride concentration in the cell, thus reducing its toxicity. In Hahella chejuensis (strain KCTC 2396), this protein is Fluoride-specific ion channel FluC.